A 400-amino-acid polypeptide reads, in one-letter code: MARIFVVSEYVGANQNSTGYYWEKIIGKMQREFGGLTVIFPLTAGETPPVVSPSVDQECFKFPRSNKNRLLSRGLAQIFQAFLFSVKLTSRARRGDVVLSGTNPALLLMTFPLLRYALGFKWVLLVHDVFPENLVPAGVLKKDSIAYRLLRRLFSFIYSSADRLVVIGRDMEALMKEKVNDPRSLVFISNWACEKEVFPVPREDAPFINIPEWKGKRVFQFFGNVGRLQGIENILSAIQLVKNEKAAFAFIGDGALVDSVKKHALEDQCARLRYFGRLPLAEKNFGLAACDVALVTLEEGMFGLGVPSKAYFSMAADKPILAVMEKGAEISRIIDETGIGWNCPPNDPVALARLIDEICELDLSSLGGVPRSVLQQNYSEYISLEKFAACVRPLLSESKI.

This sequence belongs to the glycosyltransferase group 1 family. Glycosyltransferase 4 subfamily.

It participates in bacterial outer membrane biogenesis; LPS O-antigen biosynthesis. The chain is Probable glycosyltransferase WbjE (wbjE) from Pseudomonas aeruginosa.